The following is a 366-amino-acid chain: Glycine betaine monooxygenase reductase subunit (366 aa).

Residues 16–119 (NGRHLVRCVK…HGPVGLFNAI (104 aa)) form the FAD-binding FR-type domain. The 2Fe-2S ferredoxin-type domain maps to 282–366 (HQVEFTATGK…VPKGDVVIDY (85 aa)). 4 residues coordinate [2Fe-2S] cluster: C316, C321, C324, and C354.

This sequence in the N-terminal section; belongs to the FAD-binding oxidoreductase type 6 family. As to quaternary structure, the system is composed of an oxygenase subunit (GbcA) and a reductase subunit (GbcB). It depends on FAD as a cofactor. [2Fe-2S] cluster is required as a cofactor.

The catalysed reaction is glycine betaine + NADH + O2 + H(+) = N,N-dimethylglycine + formaldehyde + NAD(+) + H2O. Functionally, involved in degradation of glycine betaine. Part of a Rieske-type oxygenase system that catalyzes the conversion of glycine betaine (GB) to dimethylglycine (DMG). This subunit is the ferredoxin reductase component of the system. Required for growth on choline and GB, but not for growth on DMG. This is Glycine betaine monooxygenase reductase subunit from Pseudomonas aeruginosa (strain ATCC 15692 / DSM 22644 / CIP 104116 / JCM 14847 / LMG 12228 / 1C / PRS 101 / PAO1).